The sequence spans 118 residues: Protein TusC (118 aa).

This sequence belongs to the DsrF/TusC family. Heterohexamer, formed by a dimer of trimers. The hexameric TusBCD complex contains 2 copies each of TusB, TusC and TusD. The TusBCD complex interacts with TusE.

It is found in the cytoplasm. In terms of biological role, part of a sulfur-relay system required for 2-thiolation of 5-methylaminomethyl-2-thiouridine (mnm(5)s(2)U) at tRNA wobble positions. The chain is Protein TusC from Salmonella gallinarum (strain 287/91 / NCTC 13346).